The sequence spans 191 residues: uncharacterized protein (191 aa).

6 helical membrane-spanning segments follow: residues 4–24, 26–46, 68–88, 90–110, 135–155, and 168–188; these read IYRQ…VLIF, KQLI…YFLC, GKGA…IDDI, AVFF…IIGI, LILY…SAFI, and LYLP…CSLM.

It localises to the cell membrane. This is an uncharacterized protein from Methanocaldococcus jannaschii (strain ATCC 43067 / DSM 2661 / JAL-1 / JCM 10045 / NBRC 100440) (Methanococcus jannaschii).